Consider the following 85-residue polypeptide: Large ribosomal subunit protein bL27 (85 aa).

The tract at residues 1-20 (MAHKKAGGSTRNGRDSEAKR) is disordered.

Belongs to the bacterial ribosomal protein bL27 family.

The polypeptide is Large ribosomal subunit protein bL27 (Serratia proteamaculans (strain 568)).